The sequence spans 485 residues: WAS/WASL-interacting protein family member 3 (485 aa).

The span at 1–41 shows a compositional bias: pro residues; the sequence is MPVPPPPPPPPPPPPPPPPPLGAPPPPPLGAPPPPPPPGPP. The segment at 1–485 is disordered; it reads MPVPPPPPPP…QLSLKALPVR (485 aa). Short sequence motifs (profilin-binding motif) lie at residues 3 to 8, 11 to 16, and 31 to 36; these read VPPPPP, PPPPPP, and APPPPP. A WH2 domain is found at 56 to 73; it reads GRSALLADIQQGTRLRKV. R57 bears the Asymmetric dimethylarginine mark. Residues 69-72 carry the RLRK motif; the sequence is RLRK. The residue at position 161 (S161) is a Phosphoserine. The segment covering 176-203 has biased composition (pro residues); it reads PVPPRPSVPAPPPPTPPPPPPPPLPPAS. S211 is modified (phosphoserine). Residues 212–246 are compositionally biased toward pro residues; that stretch reads PPAPPTKVNPSVVPPPLPCAPPLPPPPPTPPPLPP. Positions 247–262 are enriched in low complexity; it reads ASALSDKAVRPQLAPL. Pro residues-rich tracts occupy residues 263-278 and 296-312; these read HLPP…PPCG and PPAP…PPLP. Position 392 is a phosphoserine (S392). The span at 392–405 shows a compositional bias: polar residues; the sequence is SPTTELSSKSQQPG. Basic and acidic residues predominate over residues 415–439; that stretch reads AIDDFESKFTFHSMEDFPPPDEYKP. Positions 424–448 match the WASP-binding motif motif; the sequence is TFHSMEDFPPPDEYKPCQKIYPSKV.

Interacts with WASL, and monomeric and filamentous actin. As to expression, isoform 1 is expressed in brain and testis and isoform 2 is expressed only in brain (at protein level).

The protein localises to the cytoplasm. May be a regulator of cytoskeletal organization (Potential). May have a role in spermatogenesis. The protein is WAS/WASL-interacting protein family member 3 (Wipf3) of Mus musculus (Mouse).